Here is a 91-residue protein sequence, read N- to C-terminus: UPF0250 protein Lcho_4239 (91 aa).

Belongs to the UPF0250 family.

This is UPF0250 protein Lcho_4239 from Leptothrix cholodnii (strain ATCC 51168 / LMG 8142 / SP-6) (Leptothrix discophora (strain SP-6)).